A 232-amino-acid polypeptide reads, in one-letter code: AA9 family lytic polysaccharide monooxygenase C (232 aa).

Positions 1–19 (MKAAVSLALLVAVAGAASA) are cleaved as a signal peptide. 2 residues coordinate Cu(2+): His20 and His91. Cys61 and Cys180 are disulfide-bonded. Positions 166 and 175 each coordinate O2. Tyr177 serves as a coordination point for Cu(2+). Asn184 carries an N-linked (GlcNAc...) asparagine glycan.

It belongs to the polysaccharide monooxygenase AA9 family. Requires Cu(2+) as cofactor.

It is found in the secreted. The enzyme catalyses [(1-&gt;4)-beta-D-glucosyl]n+m + reduced acceptor + O2 = 4-dehydro-beta-D-glucosyl-[(1-&gt;4)-beta-D-glucosyl]n-1 + [(1-&gt;4)-beta-D-glucosyl]m + acceptor + H2O.. Functionally, lytic polysaccharide monooxygenase (LPMO) that depolymerizes crystalline and amorphous polysaccharides via the oxidation of scissile alpha- or beta-(1-4)-glycosidic bonds, yielding C1 or C4 oxidation products. Catalysis by LPMOs requires the reduction of the active-site copper from Cu(II) to Cu(I) by a reducing agent and H(2)O(2) or O(2) as a cosubstrate. The chain is AA9 family lytic polysaccharide monooxygenase C from Malbranchea cinnamomea (Thermophilic fungus).